A 429-amino-acid polypeptide reads, in one-letter code: MTIISDVYAREVLDSRGNPTVEVEVHLESGVMGRALVPSGASTGEYEAVELRDGGDRYMGKGVQKAVDNVNEKIAPELIGENALDQIGIDRLMIELDGTENKGNFGANAILGVSMAVAHAAANALDIPLYVYLGGFNAKQLPVPMMNIINGGEHADNNVDIQEFMVMPVGAESFKEALRMGAEIFHNLKSVLKAKGYNTAVGDEGGFAPNLSSNEEALATIIEAIEKAGYKPGEQVKLAMDVASSELYSKEDGKYHLAGEGKVLSSEEMVSFYEELVSKYPIISIEDGLDENDWEGHKLLTERLGDKVQLVGDDLFVTNTKKLAEGIEKGIGNSILIKVNQIGTLTETFDAIEMAKRAGYTAVISHRSGETEDATIADIAVATNAGQIKTGAPSRTDRVAKYNQLLRIEDELADLAQYNGLKSFYNLSK.

Gln162 contributes to the (2R)-2-phosphoglycerate binding site. The Proton donor role is filled by Glu204. Mg(2+) is bound by residues Asp241, Glu286, and Asp313. Residues Lys338, Arg367, Ser368, and Lys389 each contribute to the (2R)-2-phosphoglycerate site. The active-site Proton acceptor is Lys338.

Belongs to the enolase family. Mg(2+) serves as cofactor.

The protein resides in the cytoplasm. The protein localises to the secreted. It is found in the cell surface. It carries out the reaction (2R)-2-phosphoglycerate = phosphoenolpyruvate + H2O. It participates in carbohydrate degradation; glycolysis; pyruvate from D-glyceraldehyde 3-phosphate: step 4/5. Its function is as follows. Catalyzes the reversible conversion of 2-phosphoglycerate (2-PG) into phosphoenolpyruvate (PEP). It is essential for the degradation of carbohydrates via glycolysis. This is Enolase from Shouchella clausii (strain KSM-K16) (Alkalihalobacillus clausii).